The primary structure comprises 2555 residues: Neurogenic locus notch homolog protein 1 (2555 aa).

Positions 1-18 (MPPLLAPLLCLALLPALA) are cleaved as a signal peptide. Residues 19–1735 (ARGPRCSQPG…VEPPPPAQLH (1717 aa)) are Extracellular-facing. EGF-like domains lie at 20-58 (RGPR…PRCQ), 59-99 (DPNP…PLCL), 102-139 (LDNA…KSCQ), and 140-176 (QADP…PTCR). Cystine bridges form between Cys-24–Cys-37, Cys-31–Cys-46, Cys-48–Cys-57, Cys-63–Cys-74, Cys-68–Cys-87, Cys-89–Cys-98, Cys-106–Cys-117, Cys-111–Cys-127, Cys-129–Cys-138, Cys-144–Cys-155, Cys-149–Cys-164, Cys-166–Cys-175, Cys-182–Cys-195, Cys-189–Cys-204, Cys-206–Cys-215, Cys-222–Cys-233, Cys-227–Cys-243, Cys-245–Cys-254, Cys-261–Cys-272, Cys-266–Cys-281, Cys-283–Cys-292, Cys-299–Cys-312, Cys-306–Cys-321, Cys-323–Cys-332, Cys-339–Cys-350, Cys-344–Cys-359, Cys-361–Cys-370, Cys-376–Cys-387, Cys-381–Cys-398, Cys-400–Cys-409, Cys-416–Cys-429, Cys-423–Cys-438, and Cys-440–Cys-449. An N-linked (GlcNAc...) asparagine glycan is attached at Asn-41. O-linked (Glc...) serine glycosylation is present at Ser-65. An O-linked (Fuc...) threonine glycan is attached at Thr-73. Residue Thr-116 is glycosylated (O-linked (Fuc...) threonine). Ser-146 is a glycosylation site (O-linked (Glc...) serine). Positions 178–216 (DVNECGQKPGLCRHGGTCHNEVGSYRCVCRATHTGPNCE) constitute an EGF-like 5; calcium-binding domain. Residue Thr-194 is glycosylated (O-linked (Fuc...) threonine). Residues 218–255 (PYVPCSPSPCQNGGTCRPTGDVTHECACLPGFTGQNCE) enclose the EGF-like 6 domain. Residue Thr-232 is glycosylated (O-linked (Fuc...) threonine; alternate). A glycan (O-linked (GalNAc...) threonine; alternate) is linked at Thr-232. The EGF-like 7; calcium-binding domain maps to 257-293 (NIDDCPGNNCKNGGACVDGVNTYNCRCPPEWTGQYCT). An EGF-like 8; calcium-binding domain is found at 295 to 333 (DVDECQLMPNACQNGGTCHNTHGGYNCVCVNGWTGEDCS). An O-linked (Fuc...) threonine glycan is attached at Thr-311. The EGF-like 9; calcium-binding domain maps to 335–371 (NIDDCASAACFHGATCHDRVASFYCECPHGRTGLLCH). Ser-341 is a glycosylation site (O-linked (Glc...) serine). Thr-349 is a glycosylation site (O-linked (Fuc...) threonine). Residues 372–410 (LNDACISNPCNEGSNCDTNPVNGKAICTCPSGYTGPACS) form the EGF-like 10 domain. Ser-378 carries an O-linked (Glc...) serine glycan. Residues 412 to 450 (DVDECSLGANPCEHAGKCINTLGSFECQCLQGYTGPRCE) form the EGF-like 11; calcium-binding domain. The interaction with DLL4 stretch occupies residues 420-421 (AN). Thr-432 and Ser-435 together coordinate Ca(2+). A glycan (O-linked (Glc...) serine) is linked at Ser-435. The interval 448 to 452 (RCEID) is interaction with DLL4. Residues Asp-452, Val-453, and Glu-455 each coordinate Ca(2+). In terms of domain architecture, EGF-like 12; calcium-binding spans 452–488 (DVNECVSNPCQNDATCLDQIGEFQCICMPGYEGVHCE). 3 disulfide bridges follow: Cys-456–Cys-467, Cys-461–Cys-476, and Cys-478–Cys-487. Ser-458 carries O-linked (Glc...) serine glycosylation. O-linked (Fuc...) threonine glycosylation is present at Thr-466. Ca(2+) is bound by residues Asp-469 and Gln-470. Ca(2+) is bound by residues Asn-490, Thr-491, and Glu-493. One can recognise an EGF-like 13; calcium-binding domain in the interval 490–526 (NTDECASSPCLHNGRCLDKINEFQCECPTGFTGHLCQ). 74 disulfide bridges follow: Cys-494/Cys-505, Cys-499/Cys-514, Cys-516/Cys-525, Cys-532/Cys-543, Cys-537/Cys-552, Cys-554/Cys-563, Cys-570/Cys-580, Cys-575/Cys-589, Cys-591/Cys-600, Cys-607/Cys-618, Cys-612/Cys-627, Cys-629/Cys-638, Cys-645/Cys-655, Cys-650/Cys-664, Cys-666/Cys-675, Cys-682/Cys-693, Cys-687/Cys-702, Cys-704/Cys-713, Cys-720/Cys-730, Cys-725/Cys-739, Cys-741/Cys-750, Cys-757/Cys-768, Cys-762/Cys-777, Cys-779/Cys-788, Cys-795/Cys-806, Cys-800/Cys-815, Cys-817/Cys-826, Cys-833/Cys-844, Cys-838/Cys-855, Cys-857/Cys-866, Cys-873/Cys-884, Cys-878/Cys-893, Cys-895/Cys-904, Cys-911/Cys-922, Cys-916/Cys-931, Cys-933/Cys-942, Cys-949/Cys-960, Cys-954/Cys-969, Cys-971/Cys-980, Cys-987/Cys-998, Cys-992/Cys-1007, Cys-1009/Cys-1018, Cys-1025/Cys-1036, Cys-1030/Cys-1045, Cys-1047/Cys-1056, Cys-1063/Cys-1074, Cys-1068/Cys-1083, Cys-1085/Cys-1094, Cys-1101/Cys-1122, Cys-1116/Cys-1131, Cys-1133/Cys-1142, Cys-1149/Cys-1160, Cys-1154/Cys-1169, Cys-1171/Cys-1180, Cys-1187/Cys-1198, Cys-1192/Cys-1207, Cys-1209/Cys-1218, Cys-1238/Cys-1253, Cys-1255/Cys-1264, Cys-1271/Cys-1284, Cys-1276/Cys-1293, Cys-1295/Cys-1304, Cys-1311/Cys-1322, Cys-1316/Cys-1334, Cys-1336/Cys-1345, Cys-1352/Cys-1363, Cys-1357/Cys-1372, Cys-1374/Cys-1383, Cys-1391/Cys-1403, Cys-1397/Cys-1414, Cys-1416/Cys-1425, Cys-1449/Cys-1472, Cys-1454/Cys-1467, and Cys-1463/Cys-1479. The O-linked (Glc...) serine glycan is linked to Ser-496. Ca(2+)-binding residues include Asp-507 and Lys-508. An EGF-like 14; calcium-binding domain is found at 528–564 (DVDECASTPCKNGAKCLDGPNTYTCVCTEGYTGTHCE). Residue Ser-534 is glycosylated (O-linked (Glc...) serine). In terms of domain architecture, EGF-like 15; calcium-binding spans 566-601 (DIDECDPDPCHYGSCKDGVATFTCLCRPGYTGHHCE). The EGF-like 16; calcium-binding domain occupies 603-639 (NINECSSQPCRHGGTCQDRDNAYLCFCLKGTTGPNCE). O-linked (Glc...) serine glycosylation occurs at Ser-609. Thr-617 carries an O-linked (Fuc...) threonine glycan. Residues 641–676 (NLDDCASSPCDSGTCLDKIDGYECACEPGYTGSMCN) form the EGF-like 17; calcium-binding domain. O-linked (Glc...) serine glycosylation occurs at Ser-647. Residues 678–714 (NIDECAGNPCHNGGTCEDGINGFTCRCPEGYHDPTCL) enclose the EGF-like 18; calcium-binding domain. O-linked (Fuc...) threonine glycosylation occurs at Thr-692. Residues 716–751 (EVNECNSNPCVHGACRDSLNGYKCDCDPGWSGTNCD) enclose the EGF-like 19; calcium-binding domain. Ser-722 carries O-linked (Glc...) serine glycosylation. One can recognise an EGF-like 20 domain in the interval 753 to 789 (NNNECESNPCVNGGTCKDMTSGYVCTCREGFSGPNCQ). Ser-759 carries O-linked (Glc...) serine glycosylation. O-linked (Fuc...) threonine glycosylation is present at Thr-767. Ser-784 is a glycosylation site (O-linked (GlcNAc) serine). One can recognise an EGF-like 21; calcium-binding domain in the interval 791 to 827 (NINECASNPCLNQGTCIDDVAGYKCNCLLPYTGATCE). O-linked (Glc...) serine glycosylation occurs at Ser-797. The O-linked (Fuc...) threonine glycan is linked to Thr-805. Residues 829–867 (VLAPCAPSPCRNGGECRQSEDYESFSCVCPTGWQGQTCE) enclose the EGF-like 22 domain. Positions 869–905 (DINECVLSPCRHGASCQNTHGGYRCHCQAGYSGRNCE) constitute an EGF-like 23; calcium-binding domain. In terms of domain architecture, EGF-like 24 spans 907–943 (DIDDCRPNPCHNGGSCTDGINTAFCDCLPGFRGTFCE). The O-linked (Fuc) serine glycan is linked to Ser-921. The 37-residue stretch at 945–981 (DINECASDPCRNGANCTDCVDSYTCTCPAGFSGIHCE) folds into the EGF-like 25; calcium-binding domain. O-linked (Glc...) serine glycosylation occurs at Ser-951. The N-linked (GlcNAc...) asparagine glycan is linked to Asn-959. EGF-like domains lie at 983–1019 (NTPD…SYCQ), 1021–1057 (DVNE…PNCQ), 1059–1095 (LVHW…LYCD), 1097–1143 (PSVS…SYCE), and 1145–1181 (LVDE…VNCS). O-linked (Fuc...) threonine glycosylation occurs at Thr-997. O-linked (Glc...) serine glycosylation is present at Ser-1027. A glycan (O-linked (Fuc...) threonine) is linked at Thr-1035. A glycan (O-linked (Glc...) serine) is linked at Ser-1065. Thr-1159 is a glycosylation site (O-linked (Fuc...) threonine). The N-linked (GlcNAc...) asparagine glycan is linked to Asn-1179. An EGF-like 31; calcium-binding domain is found at 1183-1219 (EIDECLSHPCQNGGTCLDLPNTYKCSCPRGTQGVHCE). Ser-1189 carries an O-linked (Glc...) serine glycan. O-linked (Fuc...) threonine glycosylation is present at Thr-1197. The 45-residue stretch at 1221–1265 (NVDDCNPPVDPVSRSPKCFNNGTCVDQVGGYSCTCPPGFVGERCE) folds into the EGF-like 32; calcium-binding domain. Asn-1241 carries N-linked (GlcNAc...) asparagine glycosylation. EGF-like domains lie at 1267–1305 (DVNE…RRCE), 1307–1346 (VING…ATCE), 1348–1384 (DART…PECQ), and 1387–1426 (ASSP…LLCH). O-linked (Glc...) serine glycosylation is present at Ser-1273. Residue Thr-1362 is glycosylated (O-linked (Fuc...) threonine). An O-linked (GlcNAc...) threonine glycan is attached at Thr-1379. The O-linked (Fuc...) threonine; alternate glycan is linked to Thr-1402. An O-linked (GalNAc...) threonine; alternate glycan is attached at Thr-1402. LNR repeat units lie at residues 1449 to 1489 (CELP…PWKN), 1490 to 1531 (CTQS…CNPL), and 1532 to 1571 (YDQY…RLAA). Residues Asp-1457, Asn-1460, Asp-1475, and Asp-1478 each contribute to the Ca(2+) site. A glycan (N-linked (GlcNAc...) asparagine) is linked at Asn-1489. 5 disulfide bridges follow: Cys-1490/Cys-1514, Cys-1496/Cys-1509, Cys-1505/Cys-1521, Cys-1536/Cys-1549, and Cys-1545/Cys-1561. A glycan (N-linked (GlcNAc...) asparagine) is linked at Asn-1587. Thr-1725 carries an O-linked (GalNAc...) threonine glycan. The segment at 1728–1760 (PPPPAQLHFMYVAAAAFVLLFFVGCGVLLSRKR) is interaction with PSEN1. The helical transmembrane segment at 1736–1756 (FMYVAAAAFVLLFFVGCGVLL) threads the bilayer. At 1757-2555 (SRKRRRQHGQ…QIARIPEAFK (799 aa)) the chain is on the cytoplasmic side. Lys-1759 is covalently cross-linked (Glycyl lysine isopeptide (Lys-Gly) (interchain with G-Cter in ubiquitin)). A disordered region spans residues 1780 to 1808 (KKKRREPLGEDSVGLKPLKNASDGALMDD). A Phosphothreonine modification is found at Thr-1861. ANK repeat units lie at residues 1927 to 1956 (TGET…DANI), 1960 to 1990 (MGRT…DLDA), 1994 to 2023 (DGTT…DVNA), 2027 to 2056 (LGKS…NKDM), 2060 to 2089 (REET…NRDI), and 2095 to 2122 (RLPR…VRSP). Residues 1947-1955 (LLEASADAN) form an HIF1AN-binding region. At Asn-1955 the chain carries (3S)-3-hydroxyasparagine; by HIF1AN; partial. Residues 2014–2022 (LINSHADVN) are HIF1AN-binding. A (3S)-3-hydroxyasparagine; by HIF1AN modification is found at Asn-2022. Disordered stretches follow at residues 2151–2194 (PGVQ…LDSS), 2379–2447 (LVQT…QPLG), and 2483–2555 (TPPS…EAFK). A compositionally biased stretch (low complexity) spans 2379–2408 (LVQTQQVQPQNLQMQQQNLQPANIQQQQSL). The span at 2483-2502 (TPPSQHSYSSPVDNTPSHQL) shows a compositional bias: polar residues. Over residues 2512–2527 (PSPESPDQWSSSSPHS) the composition is skewed to low complexity. Positions 2528–2547 (NVSDWSEGVSSPPTSMQSQI) are enriched in polar residues.

It belongs to the NOTCH family. In terms of assembly, heterodimer of a C-terminal fragment N(TM) and an N-terminal fragment N(EC) which are probably linked by disulfide bonds. Interacts with DNER, DTX1, DTX2 and RBPJ/RBPSUH. Also interacts with MAML1, MAML2 and MAML3 which act as transcriptional coactivators for NOTCH1. The NOTCH1 intracellular domain interacts with SNW1; the interaction involves multimerized NOTCH1 NICD and is implicated in a formation of an intermediate preactivation complex which associates with DNA-bound CBF-1/RBPJ. The activated membrane-bound form interacts with AAK1 which promotes NOTCH1 stabilization. Forms a trimeric complex with FBXW7 and SGK1. Interacts with HIF1AN. HIF1AN negatively regulates the function of notch intracellular domain (NICD), accelerating myogenic differentiation. Interacts (via NICD) with SNAI1 (via zinc fingers); the interaction induces SNAI1 degradation via MDM2-mediated ubiquitination and inhibits SNAI1-induced cell invasion. Interacts (via NICD) with MDM2A. Interacts (via NICD) with BCL6; the interaction decreases MAML1 recruitment by NOTCH1 NICD on target genes DNA and inhibits NOTCH1 transactivation activity. Interacts with THBS4. Interacts (via the EGF-like repeat region) with CCN3 (via CTCK domain). Interacts (via EGF-like domains) with DLL4 (via N-terminal DSL and MNNL domains). Interacts with ZMIZ1. Interacts (via NICD domain) with MEGF10 (via the cytoplasmic domain). Interacts with DLL1 and JAG1. Interacts (via NICD domain) with PRAG1. Forms a complex with PRAG1, N1ICD and MAML1, in a MAML1-dependent manner. Interacts (via transmembrane region) with PSEN1; the interaction is direct. Interacts with ZFP64. Post-translationally, synthesized in the endoplasmic reticulum as an inactive form which is proteolytically cleaved by a furin-like convertase in the trans-Golgi network before it reaches the plasma membrane to yield an active, ligand-accessible form. Cleavage results in a C-terminal fragment N(TM) and a N-terminal fragment N(EC). Following ligand binding, it is cleaved by ADAM17 to yield a membrane-associated intermediate fragment called notch extracellular truncation (NEXT). Following endocytosis, this fragment is then cleaved by one of the catalytic subunits of gamma-secretase (PSEN1 or PSEN2), to release a Notch-derived peptide containing the intracellular domain (NICD) from the membrane. In terms of processing, phosphorylated. O-glycosylated on the EGF-like domains. O-glucosylated at Ser-435 by KDELC1 and KDELC2. Contains both O-linked fucose and O-linked glucose in the EGF-like domains 11, 12 and 13, which are interacting with the residues on DLL4. O-linked glycosylation by GALNT11 is involved in determination of left/right symmetry: glycosylation promotes activation of NOTCH1, possibly by promoting cleavage by ADAM17, modulating the balance between motile and immotile (sensory) cilia at the left-right organiser (LRO). MFNG-, RFNG- and LFNG-mediated modification of O-fucose residues at specific EGF-like domains results in inhibition of its activation by JAG1 and enhancement of its activation by DLL1 via an increased binding to DLL1. Post-translationally, ubiquitinated. Undergoes 'Lys-29'-linked polyubiquitination by ITCH; promotes the lysosomal degradation of non-activated internalized NOTCH1. Deubiquitination by USP12 is required for transport of internalized non-activated receptor from late endosomes to lysosomes for degradation. Monoubiquitination at Lys-1759 is required for activation by gamma-secretase cleavage, it promotes interaction with AAK1, which stabilizes it. Deubiquitination by EIF3F is necessary for nuclear import of activated Notch. In terms of processing, hydroxylated at Asn-1955 by HIF1AN. Hydroxylated at Asn-2022 by HIF1AN. Hydroxylation reduces affinity for HI1AN and may thus indirectly modulate negative regulation of NICD. As to expression, in fetal tissues most abundant in spleen, brain stem and lung. Also present in most adult tissues where it is found mainly in lymphoid tissues.

It is found in the cell membrane. The protein localises to the late endosome membrane. The protein resides in the nucleus. In terms of biological role, functions as a receptor for membrane-bound ligands Jagged-1 (JAG1), Jagged-2 (JAG2) and Delta-1 (DLL1) to regulate cell-fate determination. Upon ligand activation through the released notch intracellular domain (NICD) it forms a transcriptional activator complex with RBPJ/RBPSUH and activates genes of the enhancer of split locus. Affects the implementation of differentiation, proliferation and apoptotic programs. Involved in angiogenesis; negatively regulates endothelial cell proliferation and migration and angiogenic sprouting. Involved in the maturation of both CD4(+) and CD8(+) cells in the thymus. Important for follicular differentiation and possibly cell fate selection within the follicle. During cerebellar development, functions as a receptor for neuronal DNER and is involved in the differentiation of Bergmann glia. Represses neuronal and myogenic differentiation. May play an essential role in postimplantation development, probably in some aspect of cell specification and/or differentiation. May be involved in mesoderm development, somite formation and neurogenesis. May enhance HIF1A function by sequestering HIF1AN away from HIF1A. Required for the THBS4 function in regulating protective astrogenesis from the subventricular zone (SVZ) niche after injury. Involved in determination of left/right symmetry by modulating the balance between motile and immotile (sensory) cilia at the left-right organiser (LRO). This chain is Neurogenic locus notch homolog protein 1 (NOTCH1), found in Homo sapiens (Human).